The chain runs to 312 residues: Zinc-finger homeodomain protein 9 (312 aa).

Residues 1–27 are disordered; that stretch reads MLEVRSMDMTPKSPEPESETPTRIQPA. Ser-13 carries the phosphoserine modification. The ZF-HD dimerization-type; degenerate zinc-finger motif lies at 52 to 103; the sequence is YKECLKNHAAAIGGHALDGCGEFMPSPSSTPSDPTSLKCAACGCHRNFHRRE. 2 disordered regions span residues 128 to 155 and 253 to 312; these read QPHH…PPPI and FSGG…SSSS. A compositionally biased stretch (pro residues) spans 136-155; sequence PPPLAPPLPRSPNSSSPPPI. Residues 192-255 constitute a DNA-binding region (homeobox); sequence RKRFRTKFSS…NNKNSFKFSG (64 aa). Ser-273 is modified (phosphoserine).

As to quaternary structure, homo- and heterodimer with other ZFHD proteins. Interacts with MIF3; this interaction prevents nuclear localization and DNA-binding to inhibit transcription regulation activity. Binds to ZHD1, ZHD2 and ZHD11. Mostly expressed in flowers, stems and inflorescence and, to a lower extent, in leaves and stems.

Its subcellular location is the nucleus. Putative transcription factor. The protein is Zinc-finger homeodomain protein 9 (ZHD9) of Arabidopsis thaliana (Mouse-ear cress).